A 125-amino-acid polypeptide reads, in one-letter code: Holo-[acyl-carrier-protein] synthase (125 aa).

Asp8 and Glu57 together coordinate Mg(2+).

It belongs to the P-Pant transferase superfamily. AcpS family. It depends on Mg(2+) as a cofactor.

It is found in the cytoplasm. It carries out the reaction apo-[ACP] + CoA = holo-[ACP] + adenosine 3',5'-bisphosphate + H(+). Functionally, transfers the 4'-phosphopantetheine moiety from coenzyme A to a Ser of acyl-carrier-protein. The polypeptide is Holo-[acyl-carrier-protein] synthase (Azoarcus sp. (strain BH72)).